The following is a 131-amino-acid chain: Olfactory receptor-like protein COR9 (131 aa).

The Cytoplasmic segment spans residues 1-16 (VAICSPLLYSTVMTKR). Residues 17–41 (VCMQLVVGSYMGGLLNSLTHTCGLL) traverse the membrane as a helical segment. The Extracellular segment spans residues 42–82 (GLPFCGPNVINHYFCDIPPLLQLACSDTHRNETLLLAFSAV). Asparagine 72 carries N-linked (GlcNAc...) asparagine glycosylation. A helical transmembrane segment spans residues 83 to 103 (IALFTLFVITASYMLILSVIL). The Cytoplasmic portion of the chain corresponds to 104 to 116 (KIQSDDGRKKTFH). Residues 117-131 (TCASHLTAITIFFGS) traverse the membrane as a helical segment.

Belongs to the G-protein coupled receptor 1 family.

The protein resides in the cell membrane. In terms of biological role, odorant receptor. The protein is Olfactory receptor-like protein COR9 (COR9) of Gallus gallus (Chicken).